Consider the following 520-residue polypeptide: MGKRQHQKDKMYITCAEYTHFYGGKKPDLPQTNFRRLPFDHCSLSLQPFVYPVCTPDGIVFDLLNIVPWLKKYGTNPSNGEKLDGRSLIKLNFSKNSEGKYHCPVLFTVFTNNTHIVAVRTTGNVYAYEAVEQLNIKAKNFRDLLTDEPFSRQDIITLQDPTNLDKFNVSNFYHVKNNMKIIDPDEEKAKQDPSYYLKNTNAETRETLQELYKEFKGDEILAATMKAPEKKKVDKLNAAHYSTGKVSASFTSTAMVPETTHEAAAIDEDVLRYQFVKKKGYVRLHTNKGDLNLELHCDLTPKTCENFIRLCKKHYYDGTIFHRSIRNFVIQGGDPTGTGTGGESYWGKPFKDEFRPNLSHTGRGILSMANSGPNSNRSQFFITFRSCAYLDKKHTIFGRVVGGFDVLTAMENVESDPKTDRPKEEIRIDATTVFVDPYEEADAQIAQERKTQLKVAPETKVKSSQPQAGSQGPQTFRQGVGKYINPAATKRAAEEEPSTSATVPMSKKKPSRGFGDFSSW.

The U-box domain maps to 35–108; the sequence is RRLPFDHCSL…GKYHCPVLFT (74 aa). A coiled-coil region spans residues 197 to 217; it reads LKNTNAETRETLQELYKEFKG. Lys-216 is covalently cross-linked (Glycyl lysine isopeptide (Lys-Gly) (interchain with G-Cter in SUMO2)). A PPIase cyclophilin-type domain is found at 278 to 433; that stretch reads KKGYVRLHTN…EEIRIDATTV (156 aa). The interval 456-520 is disordered; it reads APETKVKSSQ…SRGFGDFSSW (65 aa). Positions 463–474 are enriched in low complexity; sequence SSQPQAGSQGPQ. Ser-470 bears the Phosphoserine mark. Residue Lys-482 is modified to N6-acetyllysine.

This sequence belongs to the cyclophilin-type PPIase family. PPIL2 subfamily. As to quaternary structure, component of the minor spliceosome, which splices U12-type introns. Within this complex, interacts with PRPF8/PRP8, EFTUD2/SNU114 and PLRG1. Interacts with isoform 2 of BSG. Interacts (via the PPIase cyclophilin-type domain) with CRNKL1; they may form a trimeric complex with HSP90. In terms of tissue distribution, highest expression in thymus, pancreas and testis. Also detected in heart, placenta, lung, liver, skeletal muscle, kidney, spleen, prostate, ovary, small intestine and colon. Poorly detected in brain and leukocytes. Strong protein expression in lymph node (cortical, paracortical and medullar regions), thyroid (follicular epithelial cells), testis (developing spermatozoa), stomach (cells lining the gastric pit), pancreas, kidney (proximal and distal-tubule cells and collecting duct cells but not in glomeruli), endometrium and colon (goblet cells). Moderate protein expression in spleen, prostate (epithelium and squamous cell carcinomas), placenta and adrenal gland. Weak protein expression in liver, heart, breast, ovary, and lung. No protein expression in brain and bladder. High protein expression in most lymphomas and melanomas.

Its subcellular location is the nucleus. It catalyses the reaction S-ubiquitinyl-[E2 ubiquitin-conjugating enzyme]-L-cysteine + [acceptor protein]-L-lysine = [E2 ubiquitin-conjugating enzyme]-L-cysteine + N(6)-ubiquitinyl-[acceptor protein]-L-lysine.. Its pathway is protein modification; protein ubiquitination. Functionally, has a ubiquitin-protein ligase activity acting as an E3 ubiquitin protein ligase or as an ubiquitin-ubiquitin ligase promoting elongation of ubiquitin chains on substrates. By mediating 'Lys-48'-linked polyubiquitination of proteins could target them for proteasomal degradation. May also function as a chaperone, playing a role in transport to the cell membrane of BSG/Basigin for instance. Probable inactive PPIase with no peptidyl-prolyl cis-trans isomerase activity. As a component of the minor spliceosome, involved in the splicing of U12-type introns in pre-mRNAs. This chain is RING-type E3 ubiquitin-protein ligase PPIL2, found in Homo sapiens (Human).